Reading from the N-terminus, the 361-residue chain is MLTQVSATQADSNQASQASQALLDTLYQGHALTRSQSETLFASIVAGDMDPVAMAGMLVALKMRGETTAEITGAADALRSAAKPFPRSADSISTGVLDIVGTGGDGFNTINISTTAAFVAAAAGAKVAKHGNRGVSSKSGSSDLLTHCGIGLTMSPKAASACLDTLGLSFLFAPHYHEGVRHAVPVRQALKTRTIFNILGPLINPAKPEFMLLGVYSPKLLAPIVNVLNALGVKRAMVVYGSGLDEVALHGDTQVAELNNGDIRFYHLTPEELGVERADLNLLTGGEPSDNALITKAILQGKGEAAQRDAVAINAGCALYISGISDSVQAGTKLALATLKTGKAFDVLTQLAEASQTEAQG.

Residues glycine 101, 104–105, threonine 109, 111–114, 129–137, and serine 141 each bind 5-phospho-alpha-D-ribose 1-diphosphate; these read GD, NIST, and KHGNRGVSS. Position 101 (glycine 101) interacts with anthranilate. Residue serine 113 coordinates Mg(2+). Asparagine 132 lines the anthranilate pocket. Position 187 (arginine 187) interacts with anthranilate. Positions 245 and 246 each coordinate Mg(2+).

It belongs to the anthranilate phosphoribosyltransferase family. In terms of assembly, homodimer. It depends on Mg(2+) as a cofactor.

The enzyme catalyses N-(5-phospho-beta-D-ribosyl)anthranilate + diphosphate = 5-phospho-alpha-D-ribose 1-diphosphate + anthranilate. It functions in the pathway amino-acid biosynthesis; L-tryptophan biosynthesis; L-tryptophan from chorismate: step 2/5. In terms of biological role, catalyzes the transfer of the phosphoribosyl group of 5-phosphorylribose-1-pyrophosphate (PRPP) to anthranilate to yield N-(5'-phosphoribosyl)-anthranilate (PRA). This Shewanella denitrificans (strain OS217 / ATCC BAA-1090 / DSM 15013) protein is Anthranilate phosphoribosyltransferase.